The chain runs to 135 residues: Endoribonuclease YbeY (135 aa).

Positions 94, 98, and 104 each coordinate Zn(2+).

This sequence belongs to the endoribonuclease YbeY family. It depends on Zn(2+) as a cofactor.

Its subcellular location is the cytoplasm. Single strand-specific metallo-endoribonuclease involved in late-stage 70S ribosome quality control and in maturation of the 3' terminus of the 16S rRNA. The sequence is that of Endoribonuclease YbeY from Campylobacter jejuni subsp. jejuni serotype O:2 (strain ATCC 700819 / NCTC 11168).